The following is a 76-amino-acid chain: Defensin-like protein 122 (76 aa).

The signal sequence occupies residues 1–25; the sequence is MSKTTVIAIFMVVLVLGLVTKETQG. 4 disulfides stabilise this stretch: Cys29/Cys74, Cys39/Cys60, Cys44/Cys68, and Cys48/Cys70.

Belongs to the DEFL family. As to expression, expressed in flower buds, but not in stems, roots or rosette leaves.

It is found in the secreted. This chain is Defensin-like protein 122 (LCR30), found in Arabidopsis thaliana (Mouse-ear cress).